The primary structure comprises 144 residues: Nucleoside diphosphate kinase (144 aa).

ATP contacts are provided by K11, F59, R87, T93, R104, and N114. The Pros-phosphohistidine intermediate role is filled by H117.

This sequence belongs to the NDK family. As to quaternary structure, homotetramer. Mg(2+) serves as cofactor.

It localises to the cytoplasm. The enzyme catalyses a 2'-deoxyribonucleoside 5'-diphosphate + ATP = a 2'-deoxyribonucleoside 5'-triphosphate + ADP. It carries out the reaction a ribonucleoside 5'-diphosphate + ATP = a ribonucleoside 5'-triphosphate + ADP. Functionally, major role in the synthesis of nucleoside triphosphates other than ATP. The ATP gamma phosphate is transferred to the NDP beta phosphate via a ping-pong mechanism, using a phosphorylated active-site intermediate. This chain is Nucleoside diphosphate kinase, found in Vibrio atlanticus (strain LGP32) (Vibrio splendidus (strain Mel32)).